The following is a 169-amino-acid chain: Small ribosomal subunit protein uS13c (169 aa).

The transit peptide at 1–47 (MAQMVAMPVAHSLSLICNWAKSNPLSRNTLALPASNTPNKQSLSIRC) directs the protein to the chloroplast.

It belongs to the universal ribosomal protein uS13 family. In terms of assembly, part of the 30S ribosomal subunit.

It is found in the plastid. The protein resides in the chloroplast. In terms of biological role, located at the top of the head of the 30S subunit, it contacts several helices of the 16S rRNA. This chain is Small ribosomal subunit protein uS13c (RPS13), found in Arabidopsis thaliana (Mouse-ear cress).